The primary structure comprises 770 residues: Arf-GAP with coiled-coil, ANK repeat and PH domain-containing protein 2 (770 aa).

In terms of domain architecture, BAR spans 6-226 (DFEECLKDSP…MKDLGAQLDR (221 aa)). The 96-residue stretch at 266 to 361 (GIVMEGYLFK…WIKAVQTSIA (96 aa)) folds into the PH domain. Residues 371 to 392 (SEKLDKKSSPSTGSLDSGSESK) are disordered. Low complexity predominate over residues 379 to 388 (SPSTGSLDSG). Phosphoserine is present on residues Ser384 and Ser387. Positions 399–520 (ESALQRVQCI…KFVDKYSTLL (122 aa)) constitute an Arf-GAP domain. The C4-type zinc-finger motif lies at 414-437 (CCDCGLADPRWASINLGITLCIEC). Ser521 carries the post-translational modification Phosphoserine. Residues 548-561 (TPVKSNDSGIQQCS) show a composition bias toward polar residues. Residues 548–571 (TPVKSNDSGIQQCSDDGRESLPST) are disordered. Residues Ser573 and Ser576 each carry the phosphoserine modification. 3 ANK repeats span residues 632–661 (NQATPLIQAVLGGSLVTCEFLLQNGANVNQ), 665–694 (QGRGPLHHATVLGHTGQVCLFLKRGANQHA), and 698–727 (EGKDPLSIAVEAANADIVTLLRLARMNEEM). Tyr734 is modified (phosphotyrosine). Ser767 carries the phosphoserine modification.

As to quaternary structure, interacts with RAB35 (GTP-bound form); the interaction is direct and probably recruits ACAP2 to membranes. Interacts with MICALL1; the interaction is indirect through RAB35.

The protein resides in the endosome membrane. It localises to the cell membrane. GAP activity stimulated by phosphatidylinositol 4,5-bisphosphate (PIP2) and phosphatidic acid. Its function is as follows. GTPase-activating protein (GAP) for ADP ribosylation factor 6 (ARF6). Doesn't show GAP activity for RAB35. The sequence is that of Arf-GAP with coiled-coil, ANK repeat and PH domain-containing protein 2 (Acap2) from Rattus norvegicus (Rat).